A 520-amino-acid polypeptide reads, in one-letter code: Keratin, type II cytoskeletal 72 (520 aa).

The segment at 1–133 (MSRQLTLYPG…DPEIQKVRAQ (133 aa)) is head. A coil 1A region spans residues 134 to 169 (EREQIKALNNKFASFIDKVRFLEQQNQVLETKWELL). In terms of domain architecture, IF rod spans 134 to 447 (EREQIKALNN…KLLESEESRM (314 aa)). The segment at 170 to 188 (QQLDQNNSRRSLEPVHESY) is linker 1. The coil 1B stretch occupies residues 189-280 (ISNLQKQLEI…VLFEGEIAQM (92 aa)). Residues 281–304 (QSHISDTSVILSMDNNRQLDLDSI) form a linker 12 region. The segment at 305-443 (LAEVRAQYEE…ATYRKLLESE (139 aa)) is coil 2. A tail region spans residues 444–520 (ESRMAGEYPS…SSCVSKKASR (77 aa)). The segment at 495-520 (GSCGSELKDPPAKTSASSCVSKKASR) is disordered.

The protein belongs to the intermediate filament family. As to quaternary structure, heterotetramer of two type I and two type II keratins.

Functionally, has a role in hair formation. Specific component of keratin intermediate filaments in the inner root sheath (IRS) of the hair follicle. This Rattus norvegicus (Rat) protein is Keratin, type II cytoskeletal 72 (Krt72).